Here is a 330-residue protein sequence, read N- to C-terminus: DNA-directed RNA polymerase subunit alpha (330 aa).

Residues 1 to 237 form an alpha N-terminal domain (alpha-NTD) region; the sequence is MYTEINEMLT…RQLHAFVDMK (237 aa). The alpha C-terminal domain (alpha-CTD) stretch occupies residues 251–330; the sequence is FDPVLLRSVD…ENWPPASLGE (80 aa).

The protein belongs to the RNA polymerase alpha chain family. Homodimer. The RNAP catalytic core consists of 2 alpha, 1 beta, 1 beta' and 1 omega subunit. When a sigma factor is associated with the core the holoenzyme is formed, which can initiate transcription.

It catalyses the reaction RNA(n) + a ribonucleoside 5'-triphosphate = RNA(n+1) + diphosphate. Its function is as follows. DNA-dependent RNA polymerase catalyzes the transcription of DNA into RNA using the four ribonucleoside triphosphates as substrates. This is DNA-directed RNA polymerase subunit alpha from Legionella pneumophila subsp. pneumophila (strain Philadelphia 1 / ATCC 33152 / DSM 7513).